Reading from the N-terminus, the 488-residue chain is UDP-N-acetylmuramoyl-L-alanyl-D-glutamate--2,6-diaminopimelate ligase (488 aa).

S29 lines the UDP-N-acetyl-alpha-D-muramoyl-L-alanyl-D-glutamate pocket. Residue 108–114 (GTSGKTS) participates in ATP binding. UDP-N-acetyl-alpha-D-muramoyl-L-alanyl-D-glutamate contacts are provided by residues 150 to 151 (TT), S177, Q183, and R185. Residue K217 is modified to N6-carboxylysine. Meso-2,6-diaminopimelate is bound by residues R381, 405 to 408 (DNPR), G453, and E457. Positions 405 to 408 (DNPR) match the Meso-diaminopimelate recognition motif motif.

Belongs to the MurCDEF family. MurE subfamily. The cofactor is Mg(2+). Post-translationally, carboxylation is probably crucial for Mg(2+) binding and, consequently, for the gamma-phosphate positioning of ATP.

The protein localises to the cytoplasm. The enzyme catalyses UDP-N-acetyl-alpha-D-muramoyl-L-alanyl-D-glutamate + meso-2,6-diaminopimelate + ATP = UDP-N-acetyl-alpha-D-muramoyl-L-alanyl-gamma-D-glutamyl-meso-2,6-diaminopimelate + ADP + phosphate + H(+). It participates in cell wall biogenesis; peptidoglycan biosynthesis. In terms of biological role, catalyzes the addition of meso-diaminopimelic acid to the nucleotide precursor UDP-N-acetylmuramoyl-L-alanyl-D-glutamate (UMAG) in the biosynthesis of bacterial cell-wall peptidoglycan. The protein is UDP-N-acetylmuramoyl-L-alanyl-D-glutamate--2,6-diaminopimelate ligase of Brucella melitensis biotype 1 (strain ATCC 23456 / CCUG 17765 / NCTC 10094 / 16M).